Consider the following 170-residue polypeptide: Probable T4-type lysozyme 2 (170 aa).

The Proton donor role is filled by E13. D22 functions as the Nucleophile in the catalytic mechanism.

This sequence belongs to the glycosyl hydrolase 24 family.

The enzyme catalyses Hydrolysis of (1-&gt;4)-beta-linkages between N-acetylmuramic acid and N-acetyl-D-glucosamine residues in a peptidoglycan and between N-acetyl-D-glucosamine residues in chitodextrins.. The protein is Probable T4-type lysozyme 2 of Dictyostelium discoideum (Social amoeba).